We begin with the raw amino-acid sequence, 851 residues long: Protein translocase subunit SecA (851 aa).

ATP is bound by residues glutamine 88, 106-110, and aspartate 496; that span reads GEGKT. Zn(2+)-binding residues include cysteine 828, cysteine 830, cysteine 839, and histidine 840.

It belongs to the SecA family. As to quaternary structure, monomer and homodimer. Part of the essential Sec protein translocation apparatus which comprises SecA, SecYEG and auxiliary proteins SecDF-YajC and YidC. Requires Zn(2+) as cofactor.

The protein localises to the cell inner membrane. The protein resides in the cytoplasm. It carries out the reaction ATP + H2O + cellular proteinSide 1 = ADP + phosphate + cellular proteinSide 2.. Its function is as follows. Part of the Sec protein translocase complex. Interacts with the SecYEG preprotein conducting channel. Has a central role in coupling the hydrolysis of ATP to the transfer of proteins into and across the cell membrane, serving as an ATP-driven molecular motor driving the stepwise translocation of polypeptide chains across the membrane. This is Protein translocase subunit SecA from Helicobacter hepaticus (strain ATCC 51449 / 3B1).